The sequence spans 448 residues: MILNNDVKLIPGSKVEAVIRISKKFVKSKYNEILQDYSSRLKVKGFRIGKVPFSIIEGKYSDNIRALTIEKLIHKSLEEFFKSATYKPLGYAVPKILDEKLEIDFSKDFEFTVVYEAYPEFELPDISNVEVEIPEVFVSDSDVEEELKLLQLENAIVVEDSGDVKSGSIVRVDFVELDDSLSEILTTKRQDFVFTVGESNNYYGFDNDIIGMKKDEEKIVEKNYGMDYKFSELANSFKRLKISLKDIKRRDIPKLDDDFAKDIKDSFNTLEDLKEHIRENMLRLVKERSESLKLSKLLSDIAEKLNIEIPSSMFEAEFKNVLNEFSHQNKINLEQLSNSSTGLEGINDVFKENVLKKLKSKLIFQKIVDNDLTEVTDSDLEDELVKQAEDAKMKLADIKKFYQEKNLLEILKDEIKRQKVKDKILKNVKEINPKKVAFRDFINYKTGE.

One can recognise a PPIase FKBP-type domain in the interval 167–253; that stretch reads GSIVRVDFVE…LKDIKRRDIP (87 aa).

It belongs to the FKBP-type PPIase family. Tig subfamily.

It is found in the cytoplasm. The catalysed reaction is [protein]-peptidylproline (omega=180) = [protein]-peptidylproline (omega=0). In terms of biological role, involved in protein export. Acts as a chaperone by maintaining the newly synthesized protein in an open conformation. Functions as a peptidyl-prolyl cis-trans isomerase. The polypeptide is Trigger factor (Borrelia turicatae (strain 91E135)).